Here is a 129-residue protein sequence, read N- to C-terminus: Small ribosomal subunit protein uS11 (129 aa).

This sequence belongs to the universal ribosomal protein uS11 family. As to quaternary structure, part of the 30S ribosomal subunit. Interacts with proteins S7 and S18. Binds to IF-3.

Its function is as follows. Located on the platform of the 30S subunit, it bridges several disparate RNA helices of the 16S rRNA. Forms part of the Shine-Dalgarno cleft in the 70S ribosome. This chain is Small ribosomal subunit protein uS11, found in Geobacillus thermodenitrificans (strain NG80-2).